A 224-amino-acid polypeptide reads, in one-letter code: Leucyl/phenylalanyl-tRNA--protein transferase (224 aa).

The protein belongs to the L/F-transferase family.

The protein resides in the cytoplasm. It catalyses the reaction N-terminal L-lysyl-[protein] + L-leucyl-tRNA(Leu) = N-terminal L-leucyl-L-lysyl-[protein] + tRNA(Leu) + H(+). The catalysed reaction is N-terminal L-arginyl-[protein] + L-leucyl-tRNA(Leu) = N-terminal L-leucyl-L-arginyl-[protein] + tRNA(Leu) + H(+). It carries out the reaction L-phenylalanyl-tRNA(Phe) + an N-terminal L-alpha-aminoacyl-[protein] = an N-terminal L-phenylalanyl-L-alpha-aminoacyl-[protein] + tRNA(Phe). Functions in the N-end rule pathway of protein degradation where it conjugates Leu, Phe and, less efficiently, Met from aminoacyl-tRNAs to the N-termini of proteins containing an N-terminal arginine or lysine. This is Leucyl/phenylalanyl-tRNA--protein transferase from Rhodopseudomonas palustris (strain HaA2).